The sequence spans 524 residues: Phytoene desaturase (neurosporene-forming) (524 aa).

Residue 12 to 45 (VVIGAGLGGLAAAMRLGAKGYKVTVVDRLDRPGG) participates in FAD binding. Positions 500-524 (PDAPKPETPAAAAPKARTPRAKAAQ) are disordered. Residues 507–524 (TPAAAAPKARTPRAKAAQ) are compositionally biased toward low complexity.

The protein belongs to the carotenoid/retinoid oxidoreductase family. Requires FAD as cofactor.

It carries out the reaction 15-cis-phytoene + 3 A = all-trans-neurosporene + 3 AH2. It functions in the pathway carotenoid biosynthesis. Its activity is regulated as follows. Is inhibited by diphenylamine (DPA). Is also slightly inhibited by NAD, NADP or ATP in the presence of FAD. Functionally, converts phytoene into all-trans-neurosporene as the major product, via the intermediary of phytofluene and zeta-carotene, by the introduction of three double bonds. Both intermediates, phytofluene and zeta-carotene, can be used as substrates and converted to neurosporene. 1,2-epoxy phytoene is also a suitable substrate whereas the C30 diapophytoene is not. The sequence is that of Phytoene desaturase (neurosporene-forming) (crtI) from Rhodobacter capsulatus (strain ATCC BAA-309 / NBRC 16581 / SB1003).